The chain runs to 249 residues: Isoprenyl transferase 1 (249 aa).

Aspartate 30 is a catalytic residue. A Mg(2+)-binding site is contributed by aspartate 30. Residues 31 to 34 (GNGR), tryptophan 35, arginine 43, histidine 47, and 75 to 77 (STE) each bind substrate. The Proton acceptor role is filled by asparagine 78. Substrate is bound by residues tryptophan 79, arginine 81, arginine 198, and 204–206 (RMS). Residue glutamate 217 coordinates Mg(2+).

It belongs to the UPP synthase family. As to quaternary structure, homodimer. Requires Mg(2+) as cofactor.

Functionally, catalyzes the condensation of isopentenyl diphosphate (IPP) with allylic pyrophosphates generating different type of terpenoids. This is Isoprenyl transferase 1 from Tropheryma whipplei (strain Twist) (Whipple's bacillus).